The following is a 382-amino-acid chain: Acetylornithine deacetylase (382 aa).

Histidine 79 is a binding site for Zn(2+). Aspartate 81 is a catalytic residue. Position 111 (aspartate 111) interacts with Zn(2+). Residue glutamate 143 is part of the active site. 3 residues coordinate Zn(2+): glutamate 144, glutamate 168, and histidine 354.

Belongs to the peptidase M20A family. ArgE subfamily. Homodimer. It depends on Zn(2+) as a cofactor. Co(2+) serves as cofactor. Requires glutathione as cofactor.

The protein resides in the cytoplasm. It catalyses the reaction N(2)-acetyl-L-ornithine + H2O = L-ornithine + acetate. The protein operates within amino-acid biosynthesis; L-arginine biosynthesis; L-ornithine from N(2)-acetyl-L-ornithine (linear): step 1/1. Functionally, catalyzes the hydrolysis of the amide bond of N(2)-acetylated L-amino acids. Cleaves the acetyl group from N-acetyl-L-ornithine to form L-ornithine, an intermediate in L-arginine biosynthesis pathway, and a branchpoint in the synthesis of polyamines. The polypeptide is Acetylornithine deacetylase (Pasteurella multocida (strain Pm70)).